Here is a 330-residue protein sequence, read N- to C-terminus: Anthranilate phosphoribosyltransferase (330 aa).

5-phospho-alpha-D-ribose 1-diphosphate contacts are provided by residues glycine 75, glycine 78–aspartate 79, threonine 83, asparagine 85–threonine 88, lysine 103–serine 111, and alanine 115. Glycine 75 contacts anthranilate. Position 87 (serine 87) interacts with Mg(2+). An anthranilate-binding site is contributed by asparagine 106. Anthranilate is bound at residue arginine 161. 2 residues coordinate Mg(2+): aspartate 220 and glutamate 221.

This sequence belongs to the anthranilate phosphoribosyltransferase family. Homodimer. Requires Mg(2+) as cofactor.

The catalysed reaction is N-(5-phospho-beta-D-ribosyl)anthranilate + diphosphate = 5-phospho-alpha-D-ribose 1-diphosphate + anthranilate. Its pathway is amino-acid biosynthesis; L-tryptophan biosynthesis; L-tryptophan from chorismate: step 2/5. In terms of biological role, catalyzes the transfer of the phosphoribosyl group of 5-phosphorylribose-1-pyrophosphate (PRPP) to anthranilate to yield N-(5'-phosphoribosyl)-anthranilate (PRA). This is Anthranilate phosphoribosyltransferase from Novosphingobium aromaticivorans (strain ATCC 700278 / DSM 12444 / CCUG 56034 / CIP 105152 / NBRC 16084 / F199).